The chain runs to 462 residues: ATP synthase subunit beta (462 aa).

An ATP-binding site is contributed by 151 to 158 (GGAGVGKT).

This sequence belongs to the ATPase alpha/beta chains family. F-type ATPases have 2 components, CF(1) - the catalytic core - and CF(0) - the membrane proton channel. CF(1) has five subunits: alpha(3), beta(3), gamma(1), delta(1), epsilon(1). CF(0) has four main subunits: a(1), b(1), b'(1) and c(9-12).

Its subcellular location is the cell inner membrane. It catalyses the reaction ATP + H2O + 4 H(+)(in) = ADP + phosphate + 5 H(+)(out). In terms of biological role, produces ATP from ADP in the presence of a proton gradient across the membrane. The catalytic sites are hosted primarily by the beta subunits. This chain is ATP synthase subunit beta, found in Chlorobium chlorochromatii (strain CaD3).